Consider the following 110-residue polypeptide: Protein RnfH (110 aa).

The interval 86–110 (RKRAAQQAKDQEEKKKAEKSANKEN) is disordered. Basic and acidic residues predominate over residues 94–110 (KDQEEKKKAEKSANKEN).

It belongs to the UPF0125 (RnfH) family.

The sequence is that of Protein RnfH from Mannheimia succiniciproducens (strain KCTC 0769BP / MBEL55E).